Consider the following 308-residue polypeptide: HPr kinase/phosphorylase (308 aa).

Catalysis depends on residues histidine 141 and lysine 162. 156 to 163 (GKSGVGKS) is a binding site for ATP. Residue serine 163 participates in Mg(2+) binding. Aspartate 180 acts as the Proton acceptor; for phosphorylation activity. Proton donor; for dephosphorylation activity in catalysis. Residues 204-213 (MEIRGVGILD) form an important for the catalytic mechanism of both phosphorylation and dephosphorylation region. Glutamate 205 is a Mg(2+) binding site. Arginine 246 is a catalytic residue. The tract at residues 267 to 272 (PVKPGR) is important for the catalytic mechanism of dephosphorylation.

The protein belongs to the HPrK/P family. In terms of assembly, homohexamer. The cofactor is Mg(2+).

It carries out the reaction [HPr protein]-L-serine + ATP = [HPr protein]-O-phospho-L-serine + ADP + H(+). The catalysed reaction is [HPr protein]-O-phospho-L-serine + phosphate + H(+) = [HPr protein]-L-serine + diphosphate. Functionally, catalyzes the ATP- as well as the pyrophosphate-dependent phosphorylation of a specific serine residue in HPr, a phosphocarrier protein of the phosphoenolpyruvate-dependent sugar phosphotransferase system (PTS). HprK/P also catalyzes the pyrophosphate-producing, inorganic phosphate-dependent dephosphorylation (phosphorolysis) of seryl-phosphorylated HPr (P-Ser-HPr). The two antagonistic activities of HprK/P are regulated by several intracellular metabolites, which change their concentration in response to the absence or presence of rapidly metabolisable carbon sources (glucose, fructose, etc.) in the growth medium. Therefore, by controlling the phosphorylation state of HPr, HPrK/P is a sensor enzyme that plays a major role in the regulation of carbon metabolism and sugar transport: it mediates carbon catabolite repression (CCR), and regulates PTS-catalyzed carbohydrate uptake and inducer exclusion. This Peptoclostridium acidaminophilum (Eubacterium acidaminophilum) protein is HPr kinase/phosphorylase.